The following is a 124-amino-acid chain: Max-like protein 1 (124 aa).

Acidic residues predominate over residues 1–10; it reads MSDMSDLEDD. The disordered stretch occupies residues 1 to 44; the sequence is MSDMSDLEDDQTGHCGSGEHSGPFDPKRHAREQHNALERRRRDN. Residues 29-42 are basic motif; the sequence is HAREQHNALERRRR. Residues 29–82 enclose the bHLH domain; it reads HAREQHNALERRRRDNIKDMYTSLREVVPDANGERVQASRAVILKKAIESIEKG. Residues 32-44 are compositionally biased toward basic and acidic residues; the sequence is EQHNALERRRRDN. A helix-loop-helix motif region spans residues 43–82; it reads DNIKDMYTSLREVVPDANGERVQASRAVILKKAIESIEKG. Residues 86 to 113 adopt a coiled-coil conformation; sequence SATLSVDVAEQESKNAKLREEIARLKAK.

This sequence belongs to the MAX family. Heterodimer with mdl-1 in presence and absence of DNA. Interacts with tdpt-1; the interaction promotes axon regeneration after injury. In terms of tissue distribution, expressed in D-type motor neurons.

It is found in the nucleus. Its function is as follows. Transcriptional regulator which binds to the E box motif 5'-CACGTG-3', when in a heterodimeric complex with mdl-1. Involved in the control of lifespan in response to dietary restriction, the decline in protein homeostasis associated with normal aging and may overlap with the insulin-like signaling pathway. Involved in promoting infection by the microsporidian pathogen N.parisii. Required for the expression of svh-2 and the promotion of axon regeneration after injury. In Caenorhabditis elegans, this protein is Max-like protein 1.